We begin with the raw amino-acid sequence, 657 residues long: UvrABC system protein B (657 aa).

The region spanning 25-182 (KSIKKGNEFQ…KKLIEIQYER (158 aa)) is the Helicase ATP-binding domain. 38 to 45 (GVTGSGKT) provides a ligand contact to ATP. Residues 91–114 (YYDYYQPEAYVPQTDTFIEKDASI) carry the Beta-hairpin motif. In terms of domain architecture, Helicase C-terminal spans 429–595 (QIDDLYTEIQ…TINKEVRDLI (167 aa)). The 36-residue stretch at 621–656 (KKLIKEYTEEMMLAAKNLQFERAAQLRDEIEELKGK) folds into the UVR domain.

The protein belongs to the UvrB family. Forms a heterotetramer with UvrA during the search for lesions. Interacts with UvrC in an incision complex.

Its subcellular location is the cytoplasm. Its function is as follows. The UvrABC repair system catalyzes the recognition and processing of DNA lesions. A damage recognition complex composed of 2 UvrA and 2 UvrB subunits scans DNA for abnormalities. Upon binding of the UvrA(2)B(2) complex to a putative damaged site, the DNA wraps around one UvrB monomer. DNA wrap is dependent on ATP binding by UvrB and probably causes local melting of the DNA helix, facilitating insertion of UvrB beta-hairpin between the DNA strands. Then UvrB probes one DNA strand for the presence of a lesion. If a lesion is found the UvrA subunits dissociate and the UvrB-DNA preincision complex is formed. This complex is subsequently bound by UvrC and the second UvrB is released. If no lesion is found, the DNA wraps around the other UvrB subunit that will check the other stand for damage. The protein is UvrABC system protein B of Clostridium botulinum (strain Alaska E43 / Type E3).